Here is a 409-residue protein sequence, read N- to C-terminus: NADH-quinone oxidoreductase subunit D (409 aa).

The protein belongs to the complex I 49 kDa subunit family. In terms of assembly, NDH-1 is composed of 14 different subunits. Subunits NuoB, C, D, E, F, and G constitute the peripheral sector of the complex.

Its subcellular location is the cell inner membrane. It carries out the reaction a quinone + NADH + 5 H(+)(in) = a quinol + NAD(+) + 4 H(+)(out). Functionally, NDH-1 shuttles electrons from NADH, via FMN and iron-sulfur (Fe-S) centers, to quinones in the respiratory chain. The immediate electron acceptor for the enzyme in this species is believed to be ubiquinone. Couples the redox reaction to proton translocation (for every two electrons transferred, four hydrogen ions are translocated across the cytoplasmic membrane), and thus conserves the redox energy in a proton gradient. The polypeptide is NADH-quinone oxidoreductase subunit D (Helicobacter pylori (strain HPAG1)).